The primary structure comprises 720 residues: Glycine--tRNA ligase beta subunit (720 aa).

It belongs to the class-II aminoacyl-tRNA synthetase family. As to quaternary structure, tetramer of two alpha and two beta subunits.

The protein localises to the cytoplasm. The enzyme catalyses tRNA(Gly) + glycine + ATP = glycyl-tRNA(Gly) + AMP + diphosphate. The protein is Glycine--tRNA ligase beta subunit of Acidovorax sp. (strain JS42).